Reading from the N-terminus, the 569-residue chain is BICD family-like cargo adapter 1 (569 aa).

A disordered region spans residues 1–36 (MSASCLDLISAPPQPDSDRMDRALNPGRQNSPDTAG). A CC1 box motif is present at residues 97 to 101 (AAKLG). Residues 102-283 (KALLERNQDL…TLELEKHCHH (182 aa)) are a coiled coil. The interval 385–405 (ALSTDSSMDESSETLSAKDVP) is disordered. Residues 458–520 (NEQLQSAIRD…LEAWQDDMHR (63 aa)) are a coiled coil. Residues 533 to 554 (EWKDPPFSFSRRGAAASRPTQR) form a disordered region.

It belongs to the BICDR family. In terms of assembly, part of a tripartite complex with dynein and dynactin, acts an adapter linking the dynein motor complex and dynactin. In terms of tissue distribution, highly expressed in developing neural tissues and developing eye.

It is found in the cytoplasm. It localises to the cytoskeleton. Its subcellular location is the microtubule organizing center. The protein resides in the centrosome. Its function is as follows. Acts as an adapter protein linking the dynein motor complex to various cargos and converts dynein from a non-processive to a highly processive motor in the presence of dynactin. Facilitates the interaction between dynein and dynactin and activates dynein processivity (the ability to move along a microtubule for a long distance without falling off the track). Predominantly recruits 2 dyneins, which increases both the force and speed of the microtubule motor. Component of secretory vesicle machinery in developing neurons that acts as a regulator of neurite outgrowth. Regulates the secretory vesicle transport by controlling the accumulation of Rab6-containing secretory vesicles in the pericentrosomal region restricting anterograde secretory transport during the early phase of neuronal differentiation, thereby inhibiting neuritogenesis. The protein is BICD family-like cargo adapter 1 (bicdl1) of Danio rerio (Zebrafish).